Reading from the N-terminus, the 322-residue chain is Fructose-1,6-bisphosphatase class 1 3 (322 aa).

Residues glutamate 84, aspartate 103, leucine 105, and aspartate 106 each coordinate Mg(2+). Substrate is bound by residues 106 to 109 (DGSS), asparagine 198, and lysine 262. Glutamate 268 serves as a coordination point for Mg(2+).

This sequence belongs to the FBPase class 1 family. As to quaternary structure, homotetramer. It depends on Mg(2+) as a cofactor.

It is found in the cytoplasm. The enzyme catalyses beta-D-fructose 1,6-bisphosphate + H2O = beta-D-fructose 6-phosphate + phosphate. It participates in carbohydrate biosynthesis; gluconeogenesis. The protein is Fructose-1,6-bisphosphatase class 1 3 of Pseudoalteromonas translucida (strain TAC 125).